The following is a 76-amino-acid chain: uncharacterized protein (76 aa).

Residues 1–24 (MPLRLCQGRKDRASDPVRDDGSPP) form a disordered region. A compositionally biased stretch (basic and acidic residues) spans 8-22 (GRKDRASDPVRDDGS).

This is an uncharacterized protein from Dryophytes versicolor (chameleon treefrog).